Reading from the N-terminus, the 1085-residue chain is Error-prone DNA polymerase (1085 aa).

The protein belongs to the DNA polymerase type-C family. DnaE2 subfamily.

It is found in the cytoplasm. The enzyme catalyses DNA(n) + a 2'-deoxyribonucleoside 5'-triphosphate = DNA(n+1) + diphosphate. DNA polymerase involved in damage-induced mutagenesis and translesion synthesis (TLS). It is not the major replicative DNA polymerase. The chain is Error-prone DNA polymerase from Symbiobacterium thermophilum (strain DSM 24528 / JCM 14929 / IAM 14863 / T).